A 192-amino-acid polypeptide reads, in one-letter code: Orotate phosphoribosyltransferase (192 aa).

116–124 (EDIVTTGLS) lines the 5-phospho-alpha-D-ribose 1-diphosphate pocket. Thr120 and Arg148 together coordinate orotate.

This sequence belongs to the purine/pyrimidine phosphoribosyltransferase family. PyrE subfamily. As to quaternary structure, homodimer. The cofactor is Mg(2+).

The catalysed reaction is orotidine 5'-phosphate + diphosphate = orotate + 5-phospho-alpha-D-ribose 1-diphosphate. It participates in pyrimidine metabolism; UMP biosynthesis via de novo pathway; UMP from orotate: step 1/2. Functionally, catalyzes the transfer of a ribosyl phosphate group from 5-phosphoribose 1-diphosphate to orotate, leading to the formation of orotidine monophosphate (OMP). The sequence is that of Orotate phosphoribosyltransferase from Bartonella henselae (strain ATCC 49882 / DSM 28221 / CCUG 30454 / Houston 1) (Rochalimaea henselae).